The primary structure comprises 122 residues: MIQERTILNVADNSGARKIRCFRVTKGLKRRYASIGDVIHASVQDALPHANVKKGDVVKAVVVRTVKEIRRADGTYIKFDDNATVIINDEGEPKGTRIFGPVAKELRENNYLKIISLAPEVI.

It belongs to the universal ribosomal protein uL14 family. As to quaternary structure, part of the 50S ribosomal subunit. Forms a cluster with proteins L3 and L19. In the 70S ribosome, L14 and L19 interact and together make contacts with the 16S rRNA in bridges B5 and B8.

Functionally, binds to 23S rRNA. Forms part of two intersubunit bridges in the 70S ribosome. This chain is Large ribosomal subunit protein uL14, found in Endomicrobium trichonymphae.